Here is a 768-residue protein sequence, read N- to C-terminus: Photosystem I P700 chlorophyll a apoprotein A1 (768 aa).

A run of 8 helical transmembrane segments spans residues 76–99 (VFSAHFGHLAVIFIWMSAAFFHGA), 162–185 (LMALAIGALLMAAIMLHGGIYHYH), 201–225 (LNHHIAGLVGLGSIAWAGHCIHIGA), 310–328 (ISHHHLAFGVLAVLGGHLY), 369–392 (WHAQLGLNLAMIGSLSIIISHHMY), 408–434 (LGLFTHHMWIGGLFIVGAAAHAGIAMI), 456–478 (ALISHLNWACMFLGFHSFGLYIH), and 559–577 (FMIHHIHAFTIHVTLLILL). [4Fe-4S] cluster contacts are provided by cysteine 601 and cysteine 610. 2 consecutive transmembrane segments (helical) span residues 617 to 638 (HVFLGLFWMYNGLSVVIFHFSW) and 682 to 704 (ISMYGLMFLGAHFVWAFSLMFLF). Histidine 693 provides a ligand contact to divinylchlorophyll a'. Divinyl chlorophyll a-binding residues include methionine 701 and tyrosine 709. Tryptophan 710 contacts phylloquinone. Residues 742-762 (AVGAAHFLLGGIATTWAFFHA) form a helical membrane-spanning segment.

Belongs to the PsaA/PsaB family. The PsaA/B heterodimer binds the P700 divinyl chlorophyll special pair and subsequent electron acceptors. PSI consists of a core antenna complex that captures photons, and an electron transfer chain that converts photonic excitation into a charge separation. The cyanobacterial PSI reaction center is composed of one copy each of PsaA,B,C,D,E,F,I,J,K,L,M and X, and forms trimeric complexes. Requires PSI electron transfer chain: 5 divinyl chlorophyll a, 1 divinyl chlorophyll a', 2 phylloquinones and 3 4Fe-4S clusters. PSI core antenna: 90 divinyl chlorophyll a, 22 carotenoids, 3 phospholipids and 1 galactolipid. P700 is a divinyl chlorophyll a/divinyl chlorophyll a' dimer, A0 is one or more divinyl chlorophyll a, A1 is one or both phylloquinones and FX is a shared 4Fe-4S iron-sulfur center. as cofactor.

The protein resides in the cellular thylakoid membrane. It carries out the reaction reduced [plastocyanin] + hnu + oxidized [2Fe-2S]-[ferredoxin] = oxidized [plastocyanin] + reduced [2Fe-2S]-[ferredoxin]. Functionally, psaA and PsaB bind P700, the primary electron donor of photosystem I (PSI), as well as the electron acceptors A0, A1 and FX. PSI is a plastocyanin/cytochrome c6-ferredoxin oxidoreductase, converting photonic excitation into a charge separation, which transfers an electron from the donor P700 chlorophyll pair to the spectroscopically characterized acceptors A0, A1, FX, FA and FB in turn. Oxidized P700 is reduced on the lumenal side of the thylakoid membrane by plastocyanin or cytochrome c6. The sequence is that of Photosystem I P700 chlorophyll a apoprotein A1 from Prochlorococcus marinus (strain NATL1A).